Here is a 202-residue protein sequence, read N- to C-terminus: Probable GTP-binding protein EngB (202 aa).

In terms of domain architecture, EngB-type G spans 30 to 201 (NILQIALAGR…WERIQYTIDS (172 aa)). GTP-binding positions include 38 to 45 (GRSNVGKS), 65 to 69 (GKTRS), 84 to 87 (DLPG), 151 to 154 (TKID), and 180 to 182 (VSS). Residues serine 45 and threonine 67 each coordinate Mg(2+).

This sequence belongs to the TRAFAC class TrmE-Era-EngA-EngB-Septin-like GTPase superfamily. EngB GTPase family. It depends on Mg(2+) as a cofactor.

In terms of biological role, necessary for normal cell division and for the maintenance of normal septation. This Lawsonia intracellularis (strain PHE/MN1-00) protein is Probable GTP-binding protein EngB.